The chain runs to 178 residues: UPF0114 protein in repA1-repA2 intergenic region (178 aa).

The next 3 helical transmembrane spans lie at 14-34 (WLIF…TLKF), 53-73 (LILV…LVMV), and 136-156 (WYVI…YIDR).

The protein belongs to the UPF0114 family.

The protein resides in the cell membrane. The chain is UPF0114 protein in repA1-repA2 intergenic region from Buchnera aphidicola subsp. Tetraneura caerulescens.